A 230-amino-acid polypeptide reads, in one-letter code: Acyl-protein thioesterase 1 (230 aa).

Active-site charge relay system residues include serine 119, aspartate 174, and histidine 208. Lysine 224 carries the post-translational modification N6-acetyllysine.

Belongs to the AB hydrolase superfamily. AB hydrolase 2 family. In terms of assembly, homodimer.

The protein localises to the cytoplasm. The protein resides in the cell membrane. It localises to the nucleus membrane. It is found in the endoplasmic reticulum. It carries out the reaction S-hexadecanoyl-L-cysteinyl-[protein] + H2O = L-cysteinyl-[protein] + hexadecanoate + H(+). The catalysed reaction is 1-hexadecanoyl-sn-glycero-3-phosphocholine + H2O = sn-glycerol 3-phosphocholine + hexadecanoate + H(+). It catalyses the reaction a 1-(9Z-octadecenoyl)-2-acyl-sn-glycero-3-phosphocholine + H2O = a 2-acyl-sn-glycero-3-phosphocholine + (9Z)-octadecenoate + H(+). In terms of biological role, acts as an acyl-protein thioesterase. Hydrolyzes fatty acids from S-acylated cysteine residues in proteins such as trimeric G alpha proteins or HRAS. Acts as a palmitoyl thioesterase that catalyzes depalmitoylation of proteins, such as ADRB2, KCNMA1 and SQSTM1. Acts as a negative regulator of autophagy by mediating palmitoylation of SQSTM1, decreasing affinity between SQSTM1 and ATG8 proteins and recruitment of ubiquitinated cargo proteins to autophagosomes. Acts as a lysophospholipase and hydrolyzes lysophosphatidylcholine (lyso-PC). Also hydrolyzes lysophosphatidylethanolamine (lyso-PE), lysophosphatidylinositol (lyso-PI) and lysophosphatidylserine (lyso-PS). Has much higher thioesterase activity than lysophospholipase activity. Contributes to the production of lysophosphatidic acid (LPA) during blood coagulation by recognizing and cleaving plasma phospholipids to generate lysophospholipids which in turn act as substrates for ENPP2 to produce LPA. The sequence is that of Acyl-protein thioesterase 1 (Lypla1) from Mus musculus (Mouse).